Consider the following 592-residue polypeptide: Putative D-/L-hydantoinase subunit B (592 aa).

The protein belongs to the HyuB family. In terms of assembly, may form a complex with HyuA.

In terms of biological role, involved in the asymmetric conversion of racemic 5-substituted hydantoins to the corresponding L-amino acids. HyuA and HyuB are both required for the conversion of D- and L-5-substituted hydantoins to corresponding N-carbamoyl-D- and N-carbamoyl-L-amino acids, respectively. The protein is Putative D-/L-hydantoinase subunit B of Pseudomonas sp. (strain NS671).